A 438-amino-acid polypeptide reads, in one-letter code: DNA polymerase IV 1 (438 aa).

The UmuC domain maps to 46–226 (LAHIDCDAFY…KPVTMIWGVG (181 aa)). Residues D50 and D143 each contribute to the Mg(2+) site. E144 is an active-site residue.

It belongs to the DNA polymerase type-Y family. In terms of assembly, monomer. Requires Mg(2+) as cofactor.

It localises to the cytoplasm. The enzyme catalyses DNA(n) + a 2'-deoxyribonucleoside 5'-triphosphate = DNA(n+1) + diphosphate. In terms of biological role, poorly processive, error-prone DNA polymerase involved in untargeted mutagenesis. Copies undamaged DNA at stalled replication forks, which arise in vivo from mismatched or misaligned primer ends. These misaligned primers can be extended by PolIV. Exhibits no 3'-5' exonuclease (proofreading) activity. May be involved in translesional synthesis, in conjunction with the beta clamp from PolIII. This Mesorhizobium japonicum (strain LMG 29417 / CECT 9101 / MAFF 303099) (Mesorhizobium loti (strain MAFF 303099)) protein is DNA polymerase IV 1 (dinB1).